The chain runs to 170 residues: Cathelicidin antimicrobial peptide (170 aa).

Positions 1-30 (MKTQRHGPSLGRWSLVLLLLGLVMPLAIVA) are cleaved as a signal peptide. Residues 31–131 (QVLSYQEAVL…DISCDKDNRR (101 aa)) constitute a propeptide, cathelin-like domain (CLD). 2 disulfide bridges follow: Cys86–Cys97 and Cys108–Cys125. Residues 150–162 (LKKIGQKIKDFLG) are active core.

It belongs to the cathelicidin family. As to quaternary structure, monomer, homodimer or homotrimer (in vitro). Oligomerizes as tetra- or hexamer in solution (in vitro). Proteolytically cleaved by proteinase PRTN3 into antibacterial peptide LL-37. Proteolytically cleaved by cathepsin CTSG and neutrophil elastase ELANE. In terms of processing, resistant to proteolytic degradation in solution, and when bound to both zwitterionic (mimicking mammalian membranes) and negatively charged membranes (mimicking bacterial membranes). Post-translationally, after secretion onto the skin surface, the CAMP gene product is processed by a serine protease-dependent mechanism into multiple novel antimicrobial peptides distinct from and shorter than cathelicidin LL-37. These peptides show enhanced antimicrobial action, acquiring the ability to kill skin pathogens such as S.aureus, E.coli and C.albicans. These peptides have lost the ability to stimulate CXCL8/IL8 release from keratinocytes. The peptides act synergistically, killing bacteria at lower concentrations when present together, and maintain activity at increased salt condition.

It localises to the secreted. The protein localises to the vesicle. In terms of biological role, antimicrobial protein that is an integral component of the innate immune system. Binds to bacterial lipopolysaccharides (LPS). Acts via neutrophil N-formyl peptide receptors to enhance the release of CXCL2. Postsecretory processing generates multiple cathelicidin antimicrobial peptides with various lengths which act as a topical antimicrobial defense in sweat on skin. The unprocessed precursor form, cathelicidin antimicrobial peptide, inhibits the growth of Gram-negative E.coli and E.aerogenes with efficiencies comparable to that of the mature peptide LL-37 (in vitro). Functionally, antimicrobial peptide that is an integral component of the innate immune system. Binds to bacterial lipopolysaccharides (LPS). Causes membrane permeabilization by forming transmembrane pores (in vitro). Causes lysis of E.coli. Exhibits antimicrobial activity against Gram-negative bacteria such as P.aeruginosa, S.typhimurium, E.aerogenes, E.coli and P.syringae, Gram-positive bacteria such as L.monocytogenes, S.epidermidis, S.pyogenes and S.aureus, as well as vancomycin-resistant enterococci (in vitro). Exhibits antimicrobial activity against methicillin-resistant S.aureus, P.mirabilis, and C.albicans in low-salt media, but not in media containing 100 mM NaCl (in vitro). Forms chiral supramolecular assemblies with quinolone signal (PQS) molecules of P.aeruginosa, which may lead to interference of bacterial quorum signaling and perturbance of bacterial biofilm formation. May form supramolecular fiber-like assemblies on bacterial membranes. Induces cytokine and chemokine producation as well as TNF/TNFA and CSF2/GMCSF production in normal human keratinocytes. Exhibits hemolytic activity against red blood cells. Exhibits antimicrobial activity against E.coli and B.megaterium (in vitro). The protein is Cathelicidin antimicrobial peptide of Trachypithecus obscurus (Dusky leaf-monkey).